The chain runs to 572 residues: MRTSQYLLSTLKETPADAEVISHQLMLRAGMIRKLASGLYTWLPTGVRVLKKVENIVREEMNNAGAIEVLMPVVQPSELWQESGRWEQYGPELLRIADRGDRPFVLGPTHEEVITDLIRNELSSYKQLPLNFYQIQTKFRDEVRPRFGVMRSREFLMKDAYSFHTSQESLQETYDAMYAAYSKIFSRMGLDFRAVQADTGSIGGSASHEFQVLAQSGEDDVVFSDTSDYAANIELAEAIAPKEPRAAATQEMTLVDTPNAKTIAELVEQFNLPIEKTVKTLLVKAVEGSSFPLVALLVRGDHELNEVKAEKLPQVASPLTFATEEEIRAVVKAGPGSLGPVNMPIPVVIDRTVAAMSDFAAGANIDGKHYFGINWDRDVATPEIADIRNVVAGDPSPDGQGTLLIKRGIEVGHIFQLGTKYSEALKASVQGEDGRNQILTMGCYGIGVTRVVAAAIEQNYDERGIVWPDAIAPFQVAILPMNMHKSFRVQELAEKLYSELRAQGIEVLLDDRKERPGVMFADMELIGIPHTIVLGDRNLDNDDIEYKYRRNGEKQLIKTGDIVDYLVKQIKG.

This sequence belongs to the class-II aminoacyl-tRNA synthetase family. ProS type 1 subfamily. As to quaternary structure, homodimer.

The protein resides in the cytoplasm. The catalysed reaction is tRNA(Pro) + L-proline + ATP = L-prolyl-tRNA(Pro) + AMP + diphosphate. In terms of biological role, catalyzes the attachment of proline to tRNA(Pro) in a two-step reaction: proline is first activated by ATP to form Pro-AMP and then transferred to the acceptor end of tRNA(Pro). As ProRS can inadvertently accommodate and process non-cognate amino acids such as alanine and cysteine, to avoid such errors it has two additional distinct editing activities against alanine. One activity is designated as 'pretransfer' editing and involves the tRNA(Pro)-independent hydrolysis of activated Ala-AMP. The other activity is designated 'posttransfer' editing and involves deacylation of mischarged Ala-tRNA(Pro). The misacylated Cys-tRNA(Pro) is not edited by ProRS. This is Proline--tRNA ligase from Escherichia coli O127:H6 (strain E2348/69 / EPEC).